We begin with the raw amino-acid sequence, 122 residues long: Vacuolar transporter chaperone complex subunit 1 (122 aa).

At 1 to 32 (MSTQPLLQTTPGKRIALPVRVEPKVFFANERT) the chain is on the cytoplasmic side. A helical membrane pass occupies residues 33–53 (FLSWLSFAVVLGGLSVGLLNF). Topologically, residues 54 to 59 (GDRIGK) are vacuolar. Residues 60–80 (ISAGLFTIVAIGTMGYALGIY) form a helical membrane-spanning segment. Residues 81 to 101 (HWRASAIRRRGSGPYDDRLGP) are Cytoplasmic-facing. The helical transmembrane segment at 102-122 (TILCFVLLAAIITNFVLRMLF) threads the bilayer.

It belongs to the VTC1 family. In terms of assembly, the VTC core complex is an integral membrane heterooligomer composed of at least the catalytic subunit vtc4 and the accessory subunits vtc1 and vtc2. vtc1 is a small membrane protein without hydrophilic domain. Vtc2 and vtc4 are related and have 2 hydrophilic domains that face the cytosol, an N-terminal SPX domain and the central core domain. The central core in vtc4 is the catalytic domain. Vtc1 interacts with GTP-bound Ras-like cdc42, which is subsequently inactivated.

The protein resides in the vacuole membrane. In terms of biological role, accessory subunit of the vacuolar transporter chaperone (VTC) complex. The VTC complex acts as a vacuolar polyphosphate polymerase that catalyzes the synthesis of inorganic polyphosphate (polyP) via transfer of phosphate from ATP to a growing polyP chain, releasing ADP. VTC exposes its catalytic domain vtc4 to the cytosol, where the growing polyP chain winds through a tunnel-shaped pocket, integrating cytoplasmic polymer synthesis with polyP membrane translocation. The VTC complex carries 9 vacuolar transmembrane domains, which are likely to constitute the translocation channel into the organelle lumen. PolyP synthesis is tightly coupled to its transport into the vacuole lumen, in order to avoid otherwise toxic intermediates in the cytosol, and it depends on the proton gradient across the membrane, formed by V-ATPase. Vtc1 contributes only 3 transmembrane domains to the complex. The VTC complex also plays a role in vacuolar membrane fusion. Involved in the control of cell polarity. The polypeptide is Vacuolar transporter chaperone complex subunit 1 (Schizosaccharomyces pombe (strain 972 / ATCC 24843) (Fission yeast)).